Reading from the N-terminus, the 599-residue chain is Elongation factor 4 (599 aa).

In terms of domain architecture, tr-type G spans 2–184 (NYKRNFSIIA…RLVRDIPAPK (183 aa)). Residues 14-19 (DHGKST) and 131-134 (NKID) each bind GTP.

It belongs to the TRAFAC class translation factor GTPase superfamily. Classic translation factor GTPase family. LepA subfamily.

The protein localises to the cell membrane. The enzyme catalyses GTP + H2O = GDP + phosphate + H(+). In terms of biological role, required for accurate and efficient protein synthesis under certain stress conditions. May act as a fidelity factor of the translation reaction, by catalyzing a one-codon backward translocation of tRNAs on improperly translocated ribosomes. Back-translocation proceeds from a post-translocation (POST) complex to a pre-translocation (PRE) complex, thus giving elongation factor G a second chance to translocate the tRNAs correctly. Binds to ribosomes in a GTP-dependent manner. The protein is Elongation factor 4 of Hamiltonella defensa subsp. Acyrthosiphon pisum (strain 5AT).